Here is a 291-residue protein sequence, read N- to C-terminus: ATP synthase gamma chain (291 aa).

Belongs to the ATPase gamma chain family. In terms of assembly, F-type ATPases have 2 components, CF(1) - the catalytic core - and CF(0) - the membrane proton channel. CF(1) has five subunits: alpha(3), beta(3), gamma(1), delta(1), epsilon(1). CF(0) has three main subunits: a, b and c.

It is found in the cell inner membrane. Functionally, produces ATP from ADP in the presence of a proton gradient across the membrane. The gamma chain is believed to be important in regulating ATPase activity and the flow of protons through the CF(0) complex. This chain is ATP synthase gamma chain, found in Methylibium petroleiphilum (strain ATCC BAA-1232 / LMG 22953 / PM1).